The chain runs to 353 residues: 3'(2'),5'-bisphosphate nucleotidase (353 aa).

The Proton acceptor role is filled by Asp-50. Glu-73, Asp-136, Ile-138, and Asp-139 together coordinate Mg(2+). Thr-141 (proton acceptor) is an active-site residue. Adenosine 3',5'-bisphosphate is bound by residues Thr-141, His-232, Ser-256, Lys-259, Arg-273, and Asp-286. AMP is bound by residues His-232, Ser-256, Lys-259, Arg-273, and Asp-286. Asp-286 is a binding site for Mg(2+).

The protein belongs to the inositol monophosphatase superfamily. Requires Mg(2+) as cofactor.

It carries out the reaction 3'-phosphoadenylyl sulfate + H2O = adenosine 5'-phosphosulfate + phosphate. The catalysed reaction is adenosine 3',5'-bisphosphate + H2O = AMP + phosphate. It catalyses the reaction adenosine 2',5'-bisphosphate + H2O = AMP + phosphate. The enzyme catalyses 1D-myo-inositol 1,4-bisphosphate + H2O = 1D-myo-inositol 4-phosphate + phosphate. It carries out the reaction 1D-myo-inositol 1,3,4-trisphosphate + H2O = 1D-myo-inositol 3,4-bisphosphate + phosphate. Inhibited by Li(+) and Na(+). Functionally, phosphatase that converts adenosine 3'-phosphate 5'-phosphosulfate (PAPS) to adenosine 5'-phosphosulfate (APS) and 3'(2')-phosphoadenosine 5'-phosphate (PAP) to AMP. May regulate the flux of sulfur in the sulfur-activation pathway by converting PAPS to APS. Is also able to hydrolyze inositol 1,4-bisphosphate (Ins(1,4)P2) and inositol 1,3,4-trisphosphate (Ins(1,3,4)P3), but is not active on inositol 1,4,5-trisphosphate, inositol 1-phosphate, fructose 1,6-bisphosphate, AMP and ATP. Its function is as follows. Confers resistance to lithium. The chain is 3'(2'),5'-bisphosphate nucleotidase (tol1) from Schizosaccharomyces pombe (strain 972 / ATCC 24843) (Fission yeast).